A 970-amino-acid chain; its full sequence is GEM-interacting protein (970 aa).

Ser-19 carries the phosphoserine modification. Disordered regions lie at residues 44 to 76 (PLLSEDPEPDKTPTATVTNEASCWSGPSPEGPV), 224 to 263 (SEDLRARSQGSPEDSAPQASPGPSKQQERRRRSREEAQAK), and 377 to 478 (PLDI…ENGL). Polar residues predominate over residues 56–65 (PTATVTNEAS). Residues Ser-71, Ser-231, Ser-234, Ser-243, Ser-437, and Ser-441 each carry the phosphoserine modification. The region spanning 81–344 (EELDLRLIRT…CCAPFEPGQR (264 aa)) is the F-BAR domain. Positions 231 to 246 (SQGSPEDSAPQASPGP) are enriched in polar residues. A compositionally biased stretch (acidic residues) spans 459-472 (SSDDFEERDPDLGD). A Phorbol-ester/DAG-type zinc finger spans residues 493-537 (THQLRRLRGPAKCRECEAFMVSGTECEECFLTCHKRCLETLLILC). A Rho-GAP domain is found at 554–757 (LQLPRDFPEE…FLIVHYEQIF (204 aa)). Position 660 is a phosphothreonine (Thr-660). The segment at 762-878 (LPQATEPPPQ…PVKYPRGGVR (117 aa)) is disordered. A compositionally biased stretch (pro residues) spans 766–778 (TEPPPQDSSPAPG). Residues 815–830 (EQHPTATPTEIPTPQS) show a composition bias toward polar residues. The span at 831–844 (DQREDVAEDTKDGG) shows a compositional bias: basic and acidic residues. Residues 847-863 (VSSQGPEDSLLGTQSRG) show a composition bias toward polar residues. Residues Ser-885, Ser-907, Ser-914, Ser-919, and Ser-923 each carry the phosphoserine modification. The interval 897 to 932 (ETPITSVPRGSLRGRGPSPAAASPEGSPLRRTPLPK) is disordered. The segment covering 910-923 (GRGPSPAAASPEGS) has biased composition (low complexity).

In terms of assembly, interacts with GEM through its N-terminal.

In terms of biological role, stimulates, in vitro and in vivo, the GTPase activity of RhoA. The chain is GEM-interacting protein (GMIP) from Homo sapiens (Human).